The primary structure comprises 347 residues: Phosphoribosylformylglycinamidine cyclo-ligase (347 aa).

The protein belongs to the AIR synthase family.

It localises to the cytoplasm. It catalyses the reaction 2-formamido-N(1)-(5-O-phospho-beta-D-ribosyl)acetamidine + ATP = 5-amino-1-(5-phospho-beta-D-ribosyl)imidazole + ADP + phosphate + H(+). It functions in the pathway purine metabolism; IMP biosynthesis via de novo pathway; 5-amino-1-(5-phospho-D-ribosyl)imidazole from N(2)-formyl-N(1)-(5-phospho-D-ribosyl)glycinamide: step 2/2. This chain is Phosphoribosylformylglycinamidine cyclo-ligase, found in Yersinia pestis.